The primary structure comprises 4841 residues: Nonribosomal peptide synthetase 2 (4841 aa).

Residues 26-429 form an adenylation 1 region; that stretch reads VKPPNQNVAL…GRLSDGQVKL (404 aa). A Carrier 1 domain is found at 531–604; sequence EPVDEFESSL…DIIFAARRQI (74 aa). Ser-565 carries the post-translational modification O-(pantetheine 4'-phosphoryl)serine. A condensation 1 region spans residues 640–1042; that stretch reads EEIIPCTPLQ…ILERPTQEIK (403 aa). Residues 1072–1463 are adenylation 2; it reads FEDVVRKHPE…GRIDDQVKLR (392 aa). Positions 1587–1665 constitute a Carrier 2 domain; it reads EGDWSRMDLV…QLAKHLEGKP (79 aa). Ser-1625 carries the O-(pantetheine 4'-phosphoryl)serine modification. The segment at 1702 to 2043 is condensation 2; it reads ILPCTPLQEA…QTVWELEADS (342 aa). Residues 2139–2212 form the Carrier 3 domain; sequence SEVELDVRQV…KIAAKLLENR (74 aa). Ser-2173 is subject to O-(pantetheine 4'-phosphoryl)serine. Residues 2248–2663 form a condensation 3 region; sequence AVLPCTPLQS…NHLATEDEAF (416 aa). Positions 2695–3090 are adenylation 3; that stretch reads AAVHPNKLAL…GRADDQVKLR (396 aa). A Carrier 4 domain is found at 3219 to 3293; the sequence is QDILVLLYDA…DLANCLAKAA (75 aa). Ser-3253 carries the post-translational modification O-(pantetheine 4'-phosphoryl)serine. The tract at residues 3333–3735 is condensation 4; sequence IAPCSPLQEG…DLAAESPQSE (403 aa). One can recognise a Carrier 5 domain in the interval 3759–3838; the sequence is QNSFEWTSEA…KMITELASIT (80 aa). Ser-3799 is modified (O-(pantetheine 4'-phosphoryl)serine). Positions 3873–4242 are condensation 5; that stretch reads SVLPPTHLQE…VEAEAVSDSL (370 aa). The region spanning 4318–4394 is the Carrier 6 domain; it reads IEWNQNEIGI…EMAQKADTKL (77 aa). Residue Ser-4355 is modified to O-(pantetheine 4'-phosphoryl)serine. Residues 4430 to 4726 form a condensation 6 region; sequence EVLPALPMQV…DIHLITSESR (297 aa).

The protein belongs to the NRP synthetase family.

The protein operates within siderophore biosynthesis. Nonribosomal peptide synthetase; part of the gene cluster that mediates the biosynthesis of hydroxamate-containing siderophores that play a critical role in virulence. Gibberella zeae produces extracellular coprogen-type siderophores as well as the intracellular siderophore ferricrocin. The role of extracellular siderophores is to supply iron to the fungus during plant infection, and the intracellular ferricrocin is required for intracellular iron distribution and storage with a crucial role in ascus and ascospore development. SID1 catalyzes the conversion of L-ornithine to N(5)-hydroxyornithine, the first step in the biosynthesis of all hydroxamate-containing siderophores. The assembly of extracellular coprogen-type siderophores is performed by the nonribosomal peptide synthetase (NRPS) NPS6 whereas the intracellular siderophore ferricrocin is assembled by NPS2. This is Nonribosomal peptide synthetase 2 from Gibberella zeae (strain ATCC MYA-4620 / CBS 123657 / FGSC 9075 / NRRL 31084 / PH-1) (Wheat head blight fungus).